The following is a 271-amino-acid chain: Phosphatidylglycerol--prolipoprotein diacylglyceryl transferase (271 aa).

7 helical membrane passes run 25–45, 60–80, 103–123, 134–154, 181–201, 209–229, and 235–255; these read WYGI…KFFV, YFIW…ILIY, FVGI…IATL, WIFL…GRIG, PSQF…VYLA, GELI…CEFY, and GIGF…IMFI. Arg-152 is an a 1,2-diacyl-sn-glycero-3-phospho-(1'-sn-glycerol) binding site.

Belongs to the Lgt family.

It localises to the cell inner membrane. The catalysed reaction is L-cysteinyl-[prolipoprotein] + a 1,2-diacyl-sn-glycero-3-phospho-(1'-sn-glycerol) = an S-1,2-diacyl-sn-glyceryl-L-cysteinyl-[prolipoprotein] + sn-glycerol 1-phosphate + H(+). The protein operates within protein modification; lipoprotein biosynthesis (diacylglyceryl transfer). Catalyzes the transfer of the diacylglyceryl group from phosphatidylglycerol to the sulfhydryl group of the N-terminal cysteine of a prolipoprotein, the first step in the formation of mature lipoproteins. The protein is Phosphatidylglycerol--prolipoprotein diacylglyceryl transferase of Campylobacter jejuni subsp. doylei (strain ATCC BAA-1458 / RM4099 / 269.97).